Consider the following 511-residue polypeptide: Bifunctional purine biosynthesis protein PurH (511 aa).

The MGS-like domain occupies 1-145 (MKQRALVSVS…KNHKFVSVIV (145 aa)).

Belongs to the PurH family.

It carries out the reaction (6R)-10-formyltetrahydrofolate + 5-amino-1-(5-phospho-beta-D-ribosyl)imidazole-4-carboxamide = 5-formamido-1-(5-phospho-D-ribosyl)imidazole-4-carboxamide + (6S)-5,6,7,8-tetrahydrofolate. The enzyme catalyses IMP + H2O = 5-formamido-1-(5-phospho-D-ribosyl)imidazole-4-carboxamide. The protein operates within purine metabolism; IMP biosynthesis via de novo pathway; 5-formamido-1-(5-phospho-D-ribosyl)imidazole-4-carboxamide from 5-amino-1-(5-phospho-D-ribosyl)imidazole-4-carboxamide (10-formyl THF route): step 1/1. It participates in purine metabolism; IMP biosynthesis via de novo pathway; IMP from 5-formamido-1-(5-phospho-D-ribosyl)imidazole-4-carboxamide: step 1/1. This chain is Bifunctional purine biosynthesis protein PurH, found in Bacillus cereus (strain AH187).